Here is a 383-residue protein sequence, read N- to C-terminus: Acetylornithine deacetylase (383 aa).

Histidine 80 serves as a coordination point for Zn(2+). Aspartate 82 is a catalytic residue. Aspartate 112 serves as a coordination point for Zn(2+). Residue glutamate 144 is part of the active site. The Zn(2+) site is built by glutamate 145, glutamate 169, and histidine 355.

The protein belongs to the peptidase M20A family. ArgE subfamily. Homodimer. It depends on Zn(2+) as a cofactor. The cofactor is Co(2+). Requires glutathione as cofactor.

It is found in the cytoplasm. It carries out the reaction N(2)-acetyl-L-ornithine + H2O = L-ornithine + acetate. The protein operates within amino-acid biosynthesis; L-arginine biosynthesis; L-ornithine from N(2)-acetyl-L-ornithine (linear): step 1/1. Functionally, catalyzes the hydrolysis of the amide bond of N(2)-acetylated L-amino acids. Cleaves the acetyl group from N-acetyl-L-ornithine to form L-ornithine, an intermediate in L-arginine biosynthesis pathway, and a branchpoint in the synthesis of polyamines. This chain is Acetylornithine deacetylase, found in Escherichia coli O127:H6 (strain E2348/69 / EPEC).